Consider the following 54-residue polypeptide: Photoreceptor disk component PRCD (54 aa).

A lipid anchor (S-palmitoyl cysteine) is attached at Cys2. The segment at 24 to 54 (QPEPSGADGAVVGSRSERDLQSSGRKEEPLK) is disordered. A compositionally biased stretch (basic and acidic residues) spans 38-54 (RSERDLQSSGRKEEPLK).

Belongs to the PRCD family. As to quaternary structure, interacts with RHO/rhodopsin; the interaction promotes PRCD stability. In terms of processing, palmitoylated at Cys-2. Palmitoylation is essential for protein stability and trafficking to the photoreceptor outer segment, but does not appear to be essential for membrane localization. Probably palmitoylated by ZDHHC3. Phosphorylated. As to expression, expressed in retina.

It is found in the cell projection. The protein resides in the cilium. The protein localises to the photoreceptor outer segment. It localises to the membrane. Its subcellular location is the endoplasmic reticulum. It is found in the golgi apparatus. Functionally, involved in vision. This Canis lupus familiaris (Dog) protein is Photoreceptor disk component PRCD.